Consider the following 512-residue polypeptide: uncharacterized protein (512 aa).

An N-terminal signal peptide occupies residues 1 to 22; the sequence is MVSSLIYSLCAVSGLLATTVNG. A glycan (N-linked (GlcNAc...) asparagine) is linked at Asn-167. Residues 251 to 282 are disordered; sequence SAASPPIYEPDRQTDPEDPETGRNNNQGFEGL.

The protein resides in the secreted. This is an uncharacterized protein from Arthroderma benhamiae (strain ATCC MYA-4681 / CBS 112371) (Trichophyton mentagrophytes).